Consider the following 185-residue polypeptide: Threonylcarbamoyl-AMP synthase (185 aa).

Positions 4–185 constitute a YrdC-like domain; the sequence is SWRVQQAARE…LATGKVVRPS (182 aa).

It belongs to the SUA5 family. TsaC subfamily.

The protein localises to the cytoplasm. The enzyme catalyses L-threonine + hydrogencarbonate + ATP = L-threonylcarbamoyladenylate + diphosphate + H2O. Functionally, required for the formation of a threonylcarbamoyl group on adenosine at position 37 (t(6)A37) in tRNAs that read codons beginning with adenine. Catalyzes the conversion of L-threonine, HCO(3)(-)/CO(2) and ATP to give threonylcarbamoyl-AMP (TC-AMP) as the acyladenylate intermediate, with the release of diphosphate. In Pseudomonas fluorescens (strain ATCC BAA-477 / NRRL B-23932 / Pf-5), this protein is Threonylcarbamoyl-AMP synthase.